Here is a 325-residue protein sequence, read N- to C-terminus: Aldo-keto reductase family 1 member A1 (325 aa).

N-acetylalanine is present on alanine 2. Position 4 is a phosphoserine (serine 4). NADP(+) contacts are provided by residues glycine 11–glycine 20, threonine 21, tryptophan 22, and aspartate 45. Tyrosine 50 acts as the Proton donor in catalysis. The residue at position 127 (lysine 127) is an N6-acetyllysine; alternate. At lysine 127 the chain carries N6-succinyllysine; alternate. Lysine 145 carries the post-translational modification N6-succinyllysine. Residues serine 162, asparagine 163, serine 211, leucine 213, serine 215, serine 216, lysine 263, serine 264, valine 265, threonine 266, arginine 269, glutamine 272, and asparagine 273 each contribute to the NADP(+) site. At serine 211 the chain carries Phosphoserine.

This sequence belongs to the aldo/keto reductase family. As to quaternary structure, monomer.

It localises to the cytoplasm. The protein resides in the cytosol. Its subcellular location is the apical cell membrane. It carries out the reaction a primary alcohol + NADP(+) = an aldehyde + NADPH + H(+). The enzyme catalyses glycerol + NADP(+) = D-glyceraldehyde + NADPH + H(+). The catalysed reaction is glycerol + NADP(+) = L-glyceraldehyde + NADPH + H(+). It catalyses the reaction L-gulonate + NADP(+) = aldehydo-D-glucuronate + NADPH + H(+). It carries out the reaction L-gulono-1,4-lactone + NADP(+) = D-glucurono-3,6-lactone + NADPH + H(+). The enzyme catalyses allyl alcohol + NADP(+) = acrolein + NADPH + H(+). The catalysed reaction is hydroxyacetone + NADP(+) = methylglyoxal + NADPH + H(+). It catalyses the reaction 3-deoxyfructose + NADP(+) = 3-deoxyglucosone + NADPH + H(+). It carries out the reaction (R)-mevalonate + NADP(+) = (R)-mevaldate + NADPH + H(+). The enzyme catalyses pyridine 3-methanol + NADP(+) = pyridine-3-carbaldehyde + NADPH + H(+). The catalysed reaction is S-nitroso-CoA + NADPH + H(+) = sulfinamide-CoA + NADP(+). It catalyses the reaction S-nitrosoglutathione + NADPH + H(+) = S-(hydroxysulfenamide)glutathione + NADP(+). Catalyzes the NADPH-dependent reduction of a wide variety of carbonyl-containing compounds to their corresponding alcohols. Displays enzymatic activity towards endogenous metabolites such as aromatic and aliphatic aldehydes, ketones, monosaccharides and bile acids, with a preference for negatively charged substrates, such as glucuronate and succinic semialdehyde. Plays an important role in ascorbic acid biosynthesis by catalyzing the reduction of D-glucuronic acid and D-glucurono-gamma-lactone. Functions as a detoxifiying enzyme by reducing a range of toxic aldehydes. Reduces methylglyoxal and 3-deoxyglucosone, which are present at elevated levels under hyperglycemic conditions and are cytotoxic. Involved also in the detoxification of lipid-derived aldehydes like acrolein. Plays a role in the activation of procarcinogens, such as polycyclic aromatic hydrocarbon trans-dihydrodiols, and in the metabolism of various xenobiotics and drugs. Also acts as an inhibitor of protein S-nitrosylation by mediating degradation of S-nitroso-coenzyme A (S-nitroso-CoA), a cofactor required to S-nitrosylate proteins. S-nitroso-CoA reductase activity is involved in reprogramming intermediary metabolism in renal proximal tubules, notably by inhibiting protein S-nitrosylation of isoform 2 of PKM (PKM2). Also acts as a S-nitroso-glutathione reductase by catalyzing the NADPH-dependent reduction of S-nitrosoglutathione. Displays no reductase activity towards retinoids. The chain is Aldo-keto reductase family 1 member A1 (AKR1A1) from Sus scrofa (Pig).